Reading from the N-terminus, the 293-residue chain is Small ribosomal subunit protein uS2 (293 aa).

The disordered stretch occupies residues 239-293 (PAGGADWEAAPAGFPAAATGEWSEAQPATWESGAAAATGPSTEWADSAPKDTAGW). Residues 247–256 (AAPAGFPAAA) show a composition bias toward low complexity.

The protein belongs to the universal ribosomal protein uS2 family. As to quaternary structure, component of the small ribosomal subunit. Mature ribosomes consist of a small (40S) and a large (60S) subunit. The 40S subunit contains about 33 different proteins and 1 molecule of RNA (18S). The 60S subunit contains about 49 different proteins and 3 molecules of RNA (25S, 5.8S and 5S). Interacts with RPS21.

The protein localises to the cytoplasm. Required for the assembly and/or stability of the 40S ribosomal subunit. Required for the processing of the 20S rRNA-precursor to mature 18S rRNA in a late step of the maturation of 40S ribosomal subunits. In Chaetomium globosum (strain ATCC 6205 / CBS 148.51 / DSM 1962 / NBRC 6347 / NRRL 1970) (Soil fungus), this protein is Small ribosomal subunit protein uS2.